The chain runs to 300 residues: Arrestin domain-containing protein 4 (300 aa).

Short sequence motifs (PPxY motif) lie at residues 231-234 (PPNY) and 276-279 (PPLY).

It belongs to the arrestin family. Interacts with ADRB2. Interacts (via PPxY motifs) with ITCH, NEDD4L and WWP2. Interacts with AVPR2. Identified in a complex containing at least ARRDC4, AVPR2 and HGS. Interacts with SLC11A2; controls the incorporation of SLC11A2 into extracellular vesicles through an ubiquitination-dependent mechanism. Interacts with TRIM65.

The protein resides in the early endosome. It localises to the cell membrane. The protein localises to the cytoplasmic vesicle. Functionally, functions as an adapter recruiting ubiquitin-protein ligases to their specific substrates. Plays a role in endocytosis of activated G protein-coupled receptors (GPCRs) Through an ubiquitination-dependent mechanism also plays a role in the incorporation of SLC11A2 into extracellular vesicles. May play a role in glucose uptake. Participates in innate immune response by promoting IFIH1/MDA5 activation through interaction with TRIM65. The protein is Arrestin domain-containing protein 4 (Arrdc4) of Rattus norvegicus (Rat).